The primary structure comprises 473 residues: Bifunctional protein HldE (473 aa).

The tract at residues 1–318 (MKLSMPRFDQ…RAIQREEGSE (318 aa)) is ribokinase. Position 194-197 (194-197 (NLSE)) interacts with ATP. The active site involves Asp263. The tract at residues 343–473 (FTNGCFDILH…TAIVEKIRKH (131 aa)) is cytidylyltransferase.

It in the N-terminal section; belongs to the carbohydrate kinase PfkB family. In the C-terminal section; belongs to the cytidylyltransferase family. In terms of assembly, homodimer.

The enzyme catalyses D-glycero-beta-D-manno-heptose 7-phosphate + ATP = D-glycero-beta-D-manno-heptose 1,7-bisphosphate + ADP + H(+). It carries out the reaction D-glycero-beta-D-manno-heptose 1-phosphate + ATP + H(+) = ADP-D-glycero-beta-D-manno-heptose + diphosphate. Its pathway is nucleotide-sugar biosynthesis; ADP-L-glycero-beta-D-manno-heptose biosynthesis; ADP-L-glycero-beta-D-manno-heptose from D-glycero-beta-D-manno-heptose 7-phosphate: step 1/4. It participates in nucleotide-sugar biosynthesis; ADP-L-glycero-beta-D-manno-heptose biosynthesis; ADP-L-glycero-beta-D-manno-heptose from D-glycero-beta-D-manno-heptose 7-phosphate: step 3/4. In terms of biological role, catalyzes the phosphorylation of D-glycero-D-manno-heptose 7-phosphate at the C-1 position to selectively form D-glycero-beta-D-manno-heptose-1,7-bisphosphate. Functionally, catalyzes the ADP transfer from ATP to D-glycero-beta-D-manno-heptose 1-phosphate, yielding ADP-D-glycero-beta-D-manno-heptose. The protein is Bifunctional protein HldE of Pseudomonas entomophila (strain L48).